Here is a 135-residue protein sequence, read N- to C-terminus: Holo-[acyl-carrier-protein] synthase (135 aa).

2 residues coordinate Mg(2+): Asp7 and Glu57.

This sequence belongs to the P-Pant transferase superfamily. AcpS family. Mg(2+) serves as cofactor.

Its subcellular location is the cytoplasm. It carries out the reaction apo-[ACP] + CoA = holo-[ACP] + adenosine 3',5'-bisphosphate + H(+). Transfers the 4'-phosphopantetheine moiety from coenzyme A to a Ser of acyl-carrier-protein. This is Holo-[acyl-carrier-protein] synthase from Corynebacterium glutamicum (strain ATCC 13032 / DSM 20300 / JCM 1318 / BCRC 11384 / CCUG 27702 / LMG 3730 / NBRC 12168 / NCIMB 10025 / NRRL B-2784 / 534).